Here is a 455-residue protein sequence, read N- to C-terminus: Phosphoglucosamine mutase (455 aa).

S104 (phosphoserine intermediate) is an active-site residue. The Mg(2+) site is built by S104, D243, D245, and D247. S104 carries the phosphoserine modification.

Belongs to the phosphohexose mutase family. Mg(2+) serves as cofactor. Post-translationally, activated by phosphorylation.

The catalysed reaction is alpha-D-glucosamine 1-phosphate = D-glucosamine 6-phosphate. In terms of biological role, catalyzes the conversion of glucosamine-6-phosphate to glucosamine-1-phosphate. This is Phosphoglucosamine mutase from Synechococcus sp. (strain CC9311).